Reading from the N-terminus, the 190-residue chain is dITP/XTP pyrophosphatase (190 aa).

7–12 (THNPNK) contacts substrate. Positions 39 and 68 each coordinate Mg(2+). The active-site Proton acceptor is D68. Substrate is bound by residues T69, 148-151 (FGYD), K171, and 176-177 (HR).

This sequence belongs to the HAM1 NTPase family. Homodimer. Mg(2+) is required as a cofactor.

The enzyme catalyses XTP + H2O = XMP + diphosphate + H(+). The catalysed reaction is dITP + H2O = dIMP + diphosphate + H(+). It carries out the reaction ITP + H2O = IMP + diphosphate + H(+). Pyrophosphatase that catalyzes the hydrolysis of nucleoside triphosphates to their monophosphate derivatives, with a high preference for the non-canonical purine nucleotides XTP (xanthosine triphosphate), dITP (deoxyinosine triphosphate) and ITP. Seems to function as a house-cleaning enzyme that removes non-canonical purine nucleotides from the nucleotide pool, thus preventing their incorporation into DNA/RNA and avoiding chromosomal lesions. This is dITP/XTP pyrophosphatase from Christiangramia forsetii (strain DSM 17595 / CGMCC 1.15422 / KT0803) (Gramella forsetii).